Here is a 637-residue protein sequence, read N- to C-terminus: tRNA 5-methylaminomethyl-2-thiouridine biosynthesis bifunctional protein MnmC (637 aa).

A tRNA (mnm(5)s(2)U34)-methyltransferase region spans residues methionine 1 to asparagine 232. The segment at isoleucine 255–aspartate 637 is FAD-dependent cmnm(5)s(2)U34 oxidoreductase.

This sequence in the N-terminal section; belongs to the methyltransferase superfamily. tRNA (mnm(5)s(2)U34)-methyltransferase family. It in the C-terminal section; belongs to the DAO family. FAD serves as cofactor.

It localises to the cytoplasm. It carries out the reaction 5-aminomethyl-2-thiouridine(34) in tRNA + S-adenosyl-L-methionine = 5-methylaminomethyl-2-thiouridine(34) in tRNA + S-adenosyl-L-homocysteine + H(+). Its function is as follows. Catalyzes the last two steps in the biosynthesis of 5-methylaminomethyl-2-thiouridine (mnm(5)s(2)U) at the wobble position (U34) in tRNA. Catalyzes the FAD-dependent demodification of cmnm(5)s(2)U34 to nm(5)s(2)U34, followed by the transfer of a methyl group from S-adenosyl-L-methionine to nm(5)s(2)U34, to form mnm(5)s(2)U34. This chain is tRNA 5-methylaminomethyl-2-thiouridine biosynthesis bifunctional protein MnmC, found in Polaromonas sp. (strain JS666 / ATCC BAA-500).